A 333-amino-acid chain; its full sequence is Holliday junction branch migration complex subunit RuvB (333 aa).

The large ATPase domain (RuvB-L) stretch occupies residues 1–182; that stretch reads MDERLLSQSH…FGVTLKLEYY (182 aa). ATP is bound by residues Leu-21, Arg-22, Gly-63, Lys-66, Thr-67, Thr-68, 129–131, Arg-172, Tyr-182, and Arg-219; that span reads EDY. A Mg(2+)-binding site is contributed by Thr-67. Residues 183–253 are small ATPAse domain (RuvB-S); it reads ETHELAAIVS…LASDALDRLH (71 aa). Residues 256-333 are head domain (RuvB-H); the sequence is ALGLDEVDHR…SHFGYEEEEE (78 aa). 2 residues coordinate DNA: Arg-311 and Arg-316.

It belongs to the RuvB family. As to quaternary structure, homohexamer. Forms an RuvA(8)-RuvB(12)-Holliday junction (HJ) complex. HJ DNA is sandwiched between 2 RuvA tetramers; dsDNA enters through RuvA and exits via RuvB. An RuvB hexamer assembles on each DNA strand where it exits the tetramer. Each RuvB hexamer is contacted by two RuvA subunits (via domain III) on 2 adjacent RuvB subunits; this complex drives branch migration. In the full resolvosome a probable DNA-RuvA(4)-RuvB(12)-RuvC(2) complex forms which resolves the HJ.

The protein resides in the cytoplasm. It carries out the reaction ATP + H2O = ADP + phosphate + H(+). Functionally, the RuvA-RuvB-RuvC complex processes Holliday junction (HJ) DNA during genetic recombination and DNA repair, while the RuvA-RuvB complex plays an important role in the rescue of blocked DNA replication forks via replication fork reversal (RFR). RuvA specifically binds to HJ cruciform DNA, conferring on it an open structure. The RuvB hexamer acts as an ATP-dependent pump, pulling dsDNA into and through the RuvAB complex. RuvB forms 2 homohexamers on either side of HJ DNA bound by 1 or 2 RuvA tetramers; 4 subunits per hexamer contact DNA at a time. Coordinated motions by a converter formed by DNA-disengaged RuvB subunits stimulates ATP hydrolysis and nucleotide exchange. Immobilization of the converter enables RuvB to convert the ATP-contained energy into a lever motion, pulling 2 nucleotides of DNA out of the RuvA tetramer per ATP hydrolyzed, thus driving DNA branch migration. The RuvB motors rotate together with the DNA substrate, which together with the progressing nucleotide cycle form the mechanistic basis for DNA recombination by continuous HJ branch migration. Branch migration allows RuvC to scan DNA until it finds its consensus sequence, where it cleaves and resolves cruciform DNA. This Exiguobacterium sp. (strain ATCC BAA-1283 / AT1b) protein is Holliday junction branch migration complex subunit RuvB.